A 199-amino-acid polypeptide reads, in one-letter code: MSKFAEPMARLIDELKKLPGVGNKSAQRLAFHILRSSNDDAELLADAVRDVKAKLRLCSICNNITDVDPCTYCANPTRNQQVICVVEEPTNISAVEKTRHFNGVYHVLHGALSPLHGVGPEHLRISNLIKRVEGGKAEEVILATNPTVEGEATATYLSKILKAEGVRVTRIATGVPVGSDIEYADEVTMQKAMEGRREL.

The C4-type zinc-finger motif lies at 58-73 (CSICNNITDVDPCTYC). Residues 81–176 (QVICVVEEPT…RVTRIATGVP (96 aa)) form the Toprim domain.

It belongs to the RecR family.

Its function is as follows. May play a role in DNA repair. It seems to be involved in an RecBC-independent recombinational process of DNA repair. It may act with RecF and RecO. In Koribacter versatilis (strain Ellin345), this protein is Recombination protein RecR.